Reading from the N-terminus, the 442-residue chain is tRNA-2-methylthio-N(6)-dimethylallyladenosine synthase (442 aa).

Positions 3-120 constitute an MTTase N-terminal domain; that stretch reads KKLYIETHGC…LPEMIDAARI (118 aa). Residues Cys12, Cys49, Cys83, Cys157, Cys161, and Cys164 each coordinate [4Fe-4S] cluster. The Radical SAM core domain occupies 143–375; it reads RIDGPSAYVS…QHRLNQQGFE (233 aa). Positions 378–442 constitute a TRAM domain; the sequence is RQMVGSVQRI…PHSLRGSLIQ (65 aa).

Belongs to the methylthiotransferase family. MiaB subfamily. As to quaternary structure, monomer. [4Fe-4S] cluster is required as a cofactor.

It is found in the cytoplasm. The enzyme catalyses N(6)-dimethylallyladenosine(37) in tRNA + (sulfur carrier)-SH + AH2 + 2 S-adenosyl-L-methionine = 2-methylsulfanyl-N(6)-dimethylallyladenosine(37) in tRNA + (sulfur carrier)-H + 5'-deoxyadenosine + L-methionine + A + S-adenosyl-L-homocysteine + 2 H(+). Functionally, catalyzes the methylthiolation of N6-(dimethylallyl)adenosine (i(6)A), leading to the formation of 2-methylthio-N6-(dimethylallyl)adenosine (ms(2)i(6)A) at position 37 in tRNAs that read codons beginning with uridine. The protein is tRNA-2-methylthio-N(6)-dimethylallyladenosine synthase of Pseudomonas fluorescens (strain Pf0-1).